The following is a 359-amino-acid chain: Peptide chain release factor 1 (359 aa).

Gln-235 carries the post-translational modification N5-methylglutamine.

This sequence belongs to the prokaryotic/mitochondrial release factor family. Post-translationally, methylated by PrmC. Methylation increases the termination efficiency of RF1.

It localises to the cytoplasm. In terms of biological role, peptide chain release factor 1 directs the termination of translation in response to the peptide chain termination codons UAG and UAA. This Nitrosomonas eutropha (strain DSM 101675 / C91 / Nm57) protein is Peptide chain release factor 1.